The chain runs to 628 residues: Leucine-rich repeat and fibronectin type-III domain-containing protein 3 (628 aa).

The first 16 residues, methionine 1–alanine 16, serve as a signal peptide directing secretion. Topologically, residues serine 17–threonine 540 are extracellular. The LRRNT domain occupies proline 19 to arginine 59. LRR repeat units lie at residues glycine 84 to aspartate 105, alanine 108 to glycine 129, asparagine 132 to aspartate 153, threonine 157 to arginine 178, asparagine 181 to arginine 202, and lysine 205 to serine 226. Residues asparagine 249–proline 295 form the LRRCT domain. An Ig-like domain is found at proline 295–threonine 382. Cysteines 317 and 366 form a disulfide. Residues asparagine 348 and asparagine 393 are each glycosylated (N-linked (GlcNAc...) asparagine). Positions glutamate 380–glycine 432 are disordered. Low complexity predominate over residues aspartate 406–threonine 429. Residues proline 427–alanine 525 form the Fibronectin type-III domain. Residues methionine 541 to leucine 561 traverse the membrane as a helical segment. Residues methionine 562 to proline 628 are Cytoplasmic-facing. The interval glutamine 587–proline 628 is disordered. The span at threonine 595–alanine 604 shows a compositional bias: pro residues. Basic and acidic residues predominate over residues glutamate 617–proline 628.

It belongs to the LRFN family. Can form heteromeric complexes with LRFN1, LRFN2, LRFN4 and LRFN5. Able to form homomeric complexes across cell junctions, between adjacent cells. Does not interact with DLG4. In terms of processing, N-glycosylated.

The protein resides in the cell membrane. It is found in the cell projection. The protein localises to the axon. Its subcellular location is the dendrite. It localises to the synapse. The protein resides in the presynaptic cell membrane. It is found in the postsynaptic cell membrane. Functionally, cell adhesion molecule that mediates homophilic cell-cell adhesion in a Ca(2+)-independent manner. Promotes neurite outgrowth in hippocampal neurons. The protein is Leucine-rich repeat and fibronectin type-III domain-containing protein 3 (LRFN3) of Ailuropoda melanoleuca (Giant panda).